We begin with the raw amino-acid sequence, 374 residues long: Flagellar P-ring protein 1 (374 aa).

The N-terminal stretch at 1–26 (MVPNLMVIKKHLIGLLLILCPLSLQA) is a signal peptide.

The protein belongs to the FlgI family. As to quaternary structure, the basal body constitutes a major portion of the flagellar organelle and consists of four rings (L,P,S, and M) mounted on a central rod.

Its subcellular location is the periplasm. It localises to the bacterial flagellum basal body. In terms of biological role, assembles around the rod to form the L-ring and probably protects the motor/basal body from shearing forces during rotation. The sequence is that of Flagellar P-ring protein 1 from Photobacterium profundum (strain SS9).